Here is a 495-residue protein sequence, read N- to C-terminus: Serine/threonine-protein kinase STN8, chloroplastic (495 aa).

A chloroplast-targeting transit peptide spans 1 to 49 (MASLLSPATPTATSAAFHSCSTAGFSTPTHISSQNSSLSLLSRRGCMMR). Residues 133–477 (FLVTEKLGEG…AAAALRHPYF (345 aa)) enclose the Protein kinase domain. ATP is bound by residues 139–147 (LGEGSFGVV) and lysine 186. The active-site Proton acceptor is the aspartate 308.

This sequence belongs to the protein kinase superfamily. Ser/Thr protein kinase family.

Its subcellular location is the plastid. It localises to the chloroplast thylakoid. The enzyme catalyses L-seryl-[protein] + ATP = O-phospho-L-seryl-[protein] + ADP + H(+). It carries out the reaction L-threonyl-[protein] + ATP = O-phospho-L-threonyl-[protein] + ADP + H(+). In terms of biological role, light-dependent serine/threonine protein kinase that specifically phosphorylates N-terminal threonine residues in psbA/D1, psbD/D2, psbC/CP43 and psbH, which are components of the core antenna complex of photosystem II. Phosphorylation of PSII core components facilitates the exchange of chlorophyll proteins between the grana and the stroma lamellae. Also involved in the phosphorylation of the calcium-sensing receptor (CaS). The sequence is that of Serine/threonine-protein kinase STN8, chloroplastic (STN8) from Arabidopsis thaliana (Mouse-ear cress).